A 507-amino-acid polypeptide reads, in one-letter code: Cytochrome P450 71A4 (507 aa).

A helical transmembrane segment spans residues 3 to 23 (VPCLWYSLLILLLLFIFLLIH). Cys448 contacts heme.

It belongs to the cytochrome P450 family. The cofactor is heme.

The protein resides in the membrane. Functionally, may have a role in maturation, such as during flavor formation or other metabolite production specific to aging tissues. The chain is Cytochrome P450 71A4 (CYP71A4) from Solanum melongena (Eggplant).